We begin with the raw amino-acid sequence, 510 residues long: Maturase K (510 aa).

It belongs to the intron maturase 2 family. MatK subfamily.

The protein localises to the plastid. It localises to the chloroplast. In terms of biological role, usually encoded in the trnK tRNA gene intron. Probably assists in splicing its own and other chloroplast group II introns. The sequence is that of Maturase K from Populus nigra (Lombardy poplar).